The following is a 614-amino-acid chain: uncharacterized protein (614 aa).

The tract at residues 23 to 68 (YPIPSHNGDGESEKNSSDSTSSKVNAKVTSSLQGAPSTNDENSVSP) is disordered. Positions 49–68 (KVTSSLQGAPSTNDENSVSP) are enriched in polar residues.

The protein to C.trachomatis CT875.

This is an uncharacterized protein from Chlamydia muridarum (strain MoPn / Nigg).